A 170-amino-acid chain; its full sequence is Phosphopantetheine adenylyltransferase (170 aa).

Position 18 (Thr18) interacts with substrate. ATP contacts are provided by residues 18 to 19 (TF) and His26. Substrate-binding residues include Lys50, Leu84, and Arg98. ATP is bound by residues 99 to 101 (GLR), Glu109, and 134 to 140 (WIYISSS).

It belongs to the bacterial CoaD family. In terms of assembly, homohexamer. Requires Mg(2+) as cofactor.

Its subcellular location is the cytoplasm. It carries out the reaction (R)-4'-phosphopantetheine + ATP + H(+) = 3'-dephospho-CoA + diphosphate. Its pathway is cofactor biosynthesis; coenzyme A biosynthesis; CoA from (R)-pantothenate: step 4/5. In terms of biological role, reversibly transfers an adenylyl group from ATP to 4'-phosphopantetheine, yielding dephospho-CoA (dPCoA) and pyrophosphate. This is Phosphopantetheine adenylyltransferase from Desulfotalea psychrophila (strain LSv54 / DSM 12343).